The chain runs to 465 residues: Chromosomal replication initiator protein DnaA (465 aa).

The tract at residues 1–87 is domain I, interacts with DnaA modulators; sequence MLWTDCLTRL…RPGSILSSSE (87 aa). The interval 81–123 is disordered; the sequence is SILSSSEQPATTTAALQTAPIPQPAKVKREPEPVANTAVSSKS. Positions 88–100 are enriched in low complexity; that stretch reads QPATTTAALQTAP. A domain II region spans residues 88–127; sequence QPATTTAALQTAPIPQPAKVKREPEPVANTAVSSKSSKKK. The domain III, AAA+ region stretch occupies residues 128–345; the sequence is LLNPQFTFSL…GALNKVVAIS (218 aa). ATP is bound by residues Gly173, Gly175, Lys176, and Thr177. The tract at residues 346–465 is domain IV, binds dsDNA; that stretch reads RFKGAPIDLD…YKNLLRLLQS (120 aa).

It belongs to the DnaA family. Oligomerizes as a right-handed, spiral filament on DNA at oriC.

It is found in the cytoplasm. Plays an essential role in the initiation and regulation of chromosomal replication. ATP-DnaA binds to the origin of replication (oriC) to initiate formation of the DNA replication initiation complex once per cell cycle. Binds the DnaA box (a 9 base pair repeat at the origin) and separates the double-stranded (ds)DNA. Forms a right-handed helical filament on oriC DNA; dsDNA binds to the exterior of the filament while single-stranded (ss)DNA is stabiized in the filament's interior. The ATP-DnaA-oriC complex binds and stabilizes one strand of the AT-rich DNA unwinding element (DUE), permitting loading of DNA polymerase. After initiation quickly degrades to an ADP-DnaA complex that is not apt for DNA replication. Binds acidic phospholipids. The protein is Chromosomal replication initiator protein DnaA of Acinetobacter baumannii (strain ATCC 17978 / DSM 105126 / CIP 53.77 / LMG 1025 / NCDC KC755 / 5377).